A 456-amino-acid polypeptide reads, in one-letter code: Putative F-box/FBD/LRR-repeat protein At1g66300 (456 aa).

The segment at 1 to 23 (MDEDGEKRVRTKRLCSPESSDKK) is disordered. The F-box domain occupies 28 to 74 (VDWVRDLPESLICHVLLNLSTKDVIKNCVLSTKWRYLWRYVPGLDLD). LRR repeat units lie at residues 136 to 163 (HLDLEWGALEIPPIVYVCKSLVSLKLCG), 185 to 210 (VKFANDLALEMLISGCLVLKSLTLCR), 234 to 260 (PNTMGPEYEELIVEIDTPKLQDLTLSH), and 347 to 372 (FYEDRWEMLPFFLESCPNLKSLVVGS). The 53-residue stretch at 377–429 (MERTSIISGHRCLLSSLEYVEIETPLTGEVFEMKLVSYLLENSPILKKLTIHL) folds into the FBD domain.

The polypeptide is Putative F-box/FBD/LRR-repeat protein At1g66300 (Arabidopsis thaliana (Mouse-ear cress)).